Here is a 181-residue protein sequence, read N- to C-terminus: MKQLLDFLPLVIFFAVYKFFDIYIASGALIAATALQLVVTYALYKKLEKMHLITFAMVTVFGTLTLVFHDDAFIKWKVTIIYALFALALGVSQLLNKSILKSMLGKEMKVADNIWAHVTWYWVSFFAICGLVNIYVAFSLPLETWVNFKVFGLTALTLINTVITVFYLYKHLPEDQRKELK.

A run of 5 helical transmembrane segments spans residues 10-30, 50-70, 72-92, 118-138, and 148-168; these read LVIFFAVYKFFDIYIASGALI, MHLITFAMVTVFGTLTLVFHD, AFIKWKVTIIYALFALALGVS, VTWYWVSFFAICGLVNIYVAF, and FKVFGLTALTLINTVITVFYL.

It belongs to the YciB family.

The protein localises to the cell inner membrane. In terms of biological role, plays a role in cell envelope biogenesis, maintenance of cell envelope integrity and membrane homeostasis. This is Inner membrane-spanning protein YciB from Shewanella oneidensis (strain ATCC 700550 / JCM 31522 / CIP 106686 / LMG 19005 / NCIMB 14063 / MR-1).